A 213-amino-acid polypeptide reads, in one-letter code: MASLFKKKTVDDVIKEQNRELRGTQRAIIRDRAALEKQEKQLELEIKKMAKIGNKEACRVLAKQLVHLRKQKTRTFAVSSKVTSMSTQTKVMNSQMKMAGAMSTTAKTMQAVNKKMDPQKTLQTMQNFQKENMKMEMTEEMINDTLDDIFDGSDDEEESQDIVNQVLDEIGIEISGKMAKAPSAARSLPSASTSKATISDEEIERQLKALGVD.

Ala2 carries the N-acetylalanine modification. The stretch at 25–55 forms a coiled coil; it reads QRAIIRDRAALEKQEKQLELEIKKMAKIGNK. Positions 179–194 are enriched in low complexity; it reads AKAPSAARSLPSASTS. The disordered stretch occupies residues 179-199; it reads AKAPSAARSLPSASTSKATIS. The residue at position 199 (Ser199) is a Phosphoserine. The short motif at 201 to 211 is the MIT-interacting motif element; it reads EEIERQLKALG.

This sequence belongs to the SNF7 family. In terms of assembly, probable core component of the endosomal sorting required for transport complex III (ESCRT-III). ESCRT-III components are thought to multimerize to form a flat lattice on the perimeter membrane of the endosome. Several assembly forms of ESCRT-III may exist that interact and act sequentially. Interacts with CHMP2A. Interacts with VPS4A. Interacts with VPS4B; the interaction is direct. In brain, it is expressed in all neuronal populations with a relatively enhanced expression in the hippocampus, frontal and temporal lobes and in both granule and Purkinje cells of the cerebellum. Not expressed in astrocytes or oligodendrocytes.

Its subcellular location is the cytoplasm. The protein resides in the cytosol. The protein localises to the late endosome membrane. Its function is as follows. Probable core component of the endosomal sorting required for transport complex III (ESCRT-III) which is involved in multivesicular bodies (MVBs) formation and sorting of endosomal cargo proteins into MVBs. MVBs contain intraluminal vesicles (ILVs) that are generated by invagination and scission from the limiting membrane of the endosome and mostly are delivered to lysosomes enabling degradation of membrane proteins, such as stimulated growth factor receptors, lysosomal enzymes and lipids. The MVB pathway appears to require the sequential function of ESCRT-O, -I,-II and -III complexes. ESCRT-III proteins mostly dissociate from the invaginating membrane before the ILV is released. The ESCRT machinery also functions in topologically equivalent membrane fission events, such as the terminal stages of cytokinesis. ESCRT-III proteins are believed to mediate the necessary vesicle extrusion and/or membrane fission activities, possibly in conjunction with the AAA ATPase VPS4. This Mus musculus (Mouse) protein is Charged multivesicular body protein 2b (Chmp2b).